A 404-amino-acid chain; its full sequence is Glucose-1-phosphate adenylyltransferase (404 aa).

Alpha-D-glucose 1-phosphate contacts are provided by residues Tyr99, Gly164, 179–180 (EK), and Ser197.

Belongs to the bacterial/plant glucose-1-phosphate adenylyltransferase family.

The catalysed reaction is alpha-D-glucose 1-phosphate + ATP + H(+) = ADP-alpha-D-glucose + diphosphate. It participates in capsule biogenesis; capsule polysaccharide biosynthesis. It functions in the pathway glycan biosynthesis; glycogen biosynthesis. Involved in the biosynthesis of ADP-glucose, a building block, required in the biosynthesis of maltose-1-phosphate (M1P) and in the elongation reactions to produce linear alpha-1,4-glucans. Catalyzes the reaction between ATP and alpha-D-glucose 1-phosphate (G1P) to produce pyrophosphate and ADP-Glc. The sequence is that of Glucose-1-phosphate adenylyltransferase from Mycobacterium bovis (strain ATCC BAA-935 / AF2122/97).